A 742-amino-acid chain; its full sequence is Phosphoribosylformylglycinamidine synthase subunit PurL (742 aa).

The active site involves H54. ATP is bound by residues Y57 and K96. E98 serves as a coordination point for Mg(2+). Substrate contacts are provided by residues 99–102 (SHNH) and R121. H100 (proton acceptor) is an active-site residue. D122 lines the Mg(2+) pocket. Residue Q245 coordinates substrate. Residue D273 coordinates Mg(2+). A substrate-binding site is contributed by 317 to 319 (ESQ). 2 residues coordinate ATP: D500 and G537. N538 contacts Mg(2+). S540 contributes to the substrate binding site.

The protein belongs to the FGAMS family. In terms of assembly, monomer. Part of the FGAM synthase complex composed of 1 PurL, 1 PurQ and 2 PurS subunits.

Its subcellular location is the cytoplasm. The catalysed reaction is N(2)-formyl-N(1)-(5-phospho-beta-D-ribosyl)glycinamide + L-glutamine + ATP + H2O = 2-formamido-N(1)-(5-O-phospho-beta-D-ribosyl)acetamidine + L-glutamate + ADP + phosphate + H(+). Its pathway is purine metabolism; IMP biosynthesis via de novo pathway; 5-amino-1-(5-phospho-D-ribosyl)imidazole from N(2)-formyl-N(1)-(5-phospho-D-ribosyl)glycinamide: step 1/2. Part of the phosphoribosylformylglycinamidine synthase complex involved in the purines biosynthetic pathway. Catalyzes the ATP-dependent conversion of formylglycinamide ribonucleotide (FGAR) and glutamine to yield formylglycinamidine ribonucleotide (FGAM) and glutamate. The FGAM synthase complex is composed of three subunits. PurQ produces an ammonia molecule by converting glutamine to glutamate. PurL transfers the ammonia molecule to FGAR to form FGAM in an ATP-dependent manner. PurS interacts with PurQ and PurL and is thought to assist in the transfer of the ammonia molecule from PurQ to PurL. In Geobacillus thermodenitrificans (strain NG80-2), this protein is Phosphoribosylformylglycinamidine synthase subunit PurL.